A 1076-amino-acid polypeptide reads, in one-letter code: MSSNTSSVMSSPRVEKRSFSSTLKSFFTNPNKKRPSSKKVFSSNLSYANHLEESDVEDTLHVNKRKRVSGTSQHSDSLTQNNNNAPIIIYGTENTERPPLLPILPIQRLRLLREKQRVRNMRELGLIQSTEFPSITSSVILGSQSKSDEGGSYLCTSSTPSPIKNGSCTRQLAGKSGEDTNVGLPILKSLKNRSNRKRFHSQSKGTVWSANFEYDLSEYDAIQKKDNKDKEGNAGGDQKTSENRNNIKSSISNGNLATGPNLTSEIEDLRADINSNRLSNPQKNLLLKGPASTVAKTAPIQESFVPNSERSGTPTLKKNIEPKKDKESIVLPTVGFDFIKDNETPSKKTSPKATSSAGAVFKSSVEMGKTDKSTKTAEAPTLSFNFSQKANKTKAVDNTVPSTTLFNFGGKSDTVTSASQPFKFGKTSEKSENHTESDAPPKSTAPIFSFGKQEENGDEGDDENEPKRKRRLPVSEDTNTKPLFDFGKTGDQKETKKGESEKDASGKPSFVFGASDKQAEGTPLFTFGKKADVTSNIDSSAQFTFGKAATAKETHTKPSETPATIVKKPTFTFGQSTSENKISEGSAKPTFSFSKSEEERKSSPISNEAAKPSFSFPGKPVDVQAPTDDKTLKPTFSFTEPAQKDSSVVSEPKKPSFTFASSKTSQPKPLFSFGKSDAAKEPPGSNTSFSFTKPPANETDKRPTPPSFTFGGSTTNNTTTTSTKPSFSFGAPESMKSTASTAAANTEKLSNGFSFTKFNHNKEKSNSPTSFFDGSASSTPIPVLGKPTDATGNTTSKSAFSFGTANTNGTNASANSTSFSFNAPATGNGTTTTSNTSGTNIAGTFNVGKPDQSIASGNTNGAGSAFGFSSSGTAATGAASNQSSFNFGNNGAGGLNPFTSATSSTNANAGLFNKPPSTNAQNVNVPSAFNFTGNNSTPGGGSVFNMNGNTNANTVFAGSNNQPHQSQTPSFNTNSSFTPSTVPNINFSGLNGGITNTATNALRPSDIFGANAASGSNSNVTNPSSIFGGAGGVPTTSFGQPQSAPNQMGMGTNNGMSMGGGVMANRKIARMRHSKR.

Positions 1–11 (MSSNTSSVMSS) are enriched in low complexity. The disordered stretch occupies residues 1–39 (MSSNTSSVMSSPRVEKRSFSSTLKSFFTNPNKKRPSSKK). The residue at position 2 (serine 2) is an N-acetylserine. Over residues 19-30 (FSSTLKSFFTNP) the composition is skewed to polar residues. Residues serine 54 and serine 161 each carry the phosphoserine modification. 2 disordered regions span residues 143–183 (SQSK…TNVG) and 224–260 (KKDNKDKEGNAGGDQKTSENRNNIKSSISNGNLATGP). 2 stretches are compositionally biased toward polar residues: residues 154–170 (LCTSSTPSPIKNGSCTR) and 243–260 (NRNNIKSSISNGNLATGP). The stretch at 336–338 (FDF) is one FXF 1 repeat. Position 381 is a phosphothreonine (threonine 381). Serine 383 carries the phosphoserine modification. The stretch at 384–386 (FNF) is one FXF 2 repeat. The disordered stretch occupies residues 403 to 518 (TTLFNFGGKS…SFVFGASDKQ (116 aa)). FXFG repeat units lie at residues 406–409 (FNFG) and 422–425 (FKFG). Residues 426 to 439 (KTSEKSENHTESDA) are compositionally biased toward basic and acidic residues. FXFG repeat units follow at residues 448–451 (FSFG) and 484–487 (FDFG). The segment covering 488 to 505 (KTGDQKETKKGESEKDAS) has biased composition (basic and acidic residues). 4 FXFG repeats span residues 510 to 513 (FVFG), 525 to 528 (FTFG), 543 to 546 (FTFG), and 571 to 574 (FTFG). A disordered region spans residues 548–743 (AATAKETHTK…SMKSTASTAA (196 aa)). FXF repeat units lie at residues 591-593 (FSF), 614-616 (FSF), 636-638 (FSF), and 657-659 (FTF). 2 stretches are compositionally biased toward polar residues: residues 634 to 649 (PTFSFTEPAQKDSSVV) and 658 to 667 (TFASSKTSQP). The residue at position 637 (serine 637) is a Phosphoserine. One copy of the FXFG 9 repeat lies at 671-674 (FSFG). One copy of the FXF 7 repeat lies at 689 to 691 (FSF). FXFG repeat units follow at residues 708–711 (FTFG) and 727–730 (FSFG). Low complexity predominate over residues 708–723 (FTFGGSTTNNTTTTST). The FXF 8 repeat unit spans residues 753-755 (FSF). One copy of the FXFG 12 repeat lies at 800 to 803 (FSFG). FXF repeat units follow at residues 819-821 (FSF) and 866-868 (FGF). An FXFG 13 repeat occupies 885 to 888 (FNFG). One copy of the FXF 11 repeat lies at 929–931 (FNF). Positions 940-979 (GGSVFNMNGNTNANTVFAGSNNQPHQSQTPSFNTNSSFTP) are disordered. Residues 944–964 (FNMNGNTNANTVFAGSNNQPH) are compositionally biased toward polar residues. Positions 965 to 979 (QSQTPSFNTNSSFTP) are enriched in low complexity. 3 FG repeats span residues 1008 to 1009 (FG), 1027 to 1028 (FG), and 1038 to 1039 (FG). The segment at 1025–1054 (SIFGGAGGVPTTSFGQPQSAPNQMGMGTNN) is disordered. A compositionally biased stretch (polar residues) spans 1034-1045 (PTTSFGQPQSAP). Residues 1040–1076 (QPQSAPNQMGMGTNNGMSMGGGVMANRKIARMRHSKR) are interaction with KAP95.

Component of the nuclear pore complex (NPC). NPC constitutes the exclusive means of nucleocytoplasmic transport. NPCs allow the passive diffusion of ions and small molecules and the active, nuclear transport receptor-mediated bidirectional transport of macromolecules such as proteins, RNAs, ribonucleoparticles (RNPs), and ribosomal subunits across the nuclear envelope. Due to its 8-fold rotational symmetry, all subunits are present with 8 copies or multiples thereof. Interacts through its FG repeats with nuclear transport receptors. Binds to the nuclear basket of the NPC through NUP60. Interacts with KAP122. Post-translationally, phosphorylated by CDC28.

It localises to the nucleus. It is found in the nuclear pore complex. The protein resides in the nucleus membrane. Functionally, functions as a component of the nuclear pore complex (NPC). NPC components, collectively referred to as nucleoporins (NUPs), can play the role of both NPC structural components and of docking or interaction partners for transiently associated nuclear transport factors. Active directional transport is assured by both, a Phe-Gly (FG) repeat affinity gradient for these transport factors across the NPC and a transport cofactor concentration gradient across the nuclear envelope (GSP1 and GSP2 GTPases associated predominantly with GTP in the nucleus, with GDP in the cytoplasm). As one of the FG repeat nucleoporins NUP1 is involved in interactions with and guidance of nuclear transport receptors such as SRP1-KAP95 (importin alpha and beta) through the NPC. Like the closely related NUP2 it also plays an important role in disassembling and recycling SRP1-KAP95 to the cytoplasm after nuclear import. Upon entry of the heterotrimeric SRP1-KAP95-cargo complex in the nucleus, NUP1 binds through its C-terminus to KAP95, thus accelerating the release of KAP95 and, indirectly, of the nuclear localization signal (NLS)-containing cargo from the SRP1-KAP95-cargo complex. The protein is Nucleoporin NUP1 (NUP1) of Saccharomyces cerevisiae (strain ATCC 204508 / S288c) (Baker's yeast).